The primary structure comprises 343 residues: S-adenosylmethionine:tRNA ribosyltransferase-isomerase (343 aa).

Belongs to the QueA family. Monomer.

It localises to the cytoplasm. It carries out the reaction 7-aminomethyl-7-carbaguanosine(34) in tRNA + S-adenosyl-L-methionine = epoxyqueuosine(34) in tRNA + adenine + L-methionine + 2 H(+). Its pathway is tRNA modification; tRNA-queuosine biosynthesis. Transfers and isomerizes the ribose moiety from AdoMet to the 7-aminomethyl group of 7-deazaguanine (preQ1-tRNA) to give epoxyqueuosine (oQ-tRNA). The sequence is that of S-adenosylmethionine:tRNA ribosyltransferase-isomerase from Coxiella burnetii (strain RSA 331 / Henzerling II).